Here is a 378-residue protein sequence, read N- to C-terminus: AT-hook motif nuclear-localized protein 5 (378 aa).

Disordered stretches follow at residues 30–70, 88–160, and 302–378; these read QVAS…AEHR, VQPT…GRKQ, and NNNK…LTRG. A compositionally biased stretch (basic residues) spans 104 to 113; it reads VKKKRGRPRK. A Bipartite nuclear localization signal motif is present at residues 105–113; that stretch reads KKKRGRPRK. 2 consecutive DNA-binding regions (a.T hook) follow at residues 105-117 and 147-159; these read KKKRGRPRKYVPD and KRARGRPPGTGRK. A PPC domain is found at 171–314; sequence TSAGLAFAPH…KTIKQEIKPK (144 aa). 2 stretches are compositionally biased toward polar residues: residues 316–327 and 335–345; these read EPTNSEMETTPG and STGQHTPQNFP.

In terms of assembly, interacts with AHL29.

It localises to the nucleus. Transcription factor that specifically binds AT-rich DNA sequences related to the nuclear matrix attachment regions (MARs). The chain is AT-hook motif nuclear-localized protein 5 from Arabidopsis thaliana (Mouse-ear cress).